Reading from the N-terminus, the 351-residue chain is MSQIQTAPLPVMPSQAAAAADAAASRWKVADVAALYELPFNDLLFRAQQVHREHFDANTVQLSTLLSIKTGGCEEDCAYCPQSVHHETGLKAEKLMEVEEVLAAARVAKENGATRFCMGAAWRNPKDRHLEPIKDMIRGVKSMGLETCVTLGMLEAHQAQALREAGLDYYNHNLDTSPEFYGQIISTRTYQDRLDTLEHVRDAGINVCCGGIVGLGESRRERAGLIAQLANMEPYPESVPINNLVQVEGTPLTGTEALDPFEFVRTIAVARITMPRAMVRLSAGREQMDEALQAMCFLAGANSIFYGDQLLTTSNPQAEADRKLLARLGIRAEAAQQMPAERECSHGCEGH.

Residues 58–285 (NTVQLSTLLS…RAMVRLSAGR (228 aa)) enclose the Radical SAM core domain. Residues Cys-73, Cys-77, and Cys-80 each coordinate [4Fe-4S] cluster. 4 residues coordinate [2Fe-2S] cluster: Cys-117, Cys-148, Cys-208, and Arg-280.

This sequence belongs to the radical SAM superfamily. Biotin synthase family. As to quaternary structure, homodimer. [4Fe-4S] cluster serves as cofactor. Requires [2Fe-2S] cluster as cofactor.

It catalyses the reaction (4R,5S)-dethiobiotin + (sulfur carrier)-SH + 2 reduced [2Fe-2S]-[ferredoxin] + 2 S-adenosyl-L-methionine = (sulfur carrier)-H + biotin + 2 5'-deoxyadenosine + 2 L-methionine + 2 oxidized [2Fe-2S]-[ferredoxin]. The protein operates within cofactor biosynthesis; biotin biosynthesis; biotin from 7,8-diaminononanoate: step 2/2. Functionally, catalyzes the conversion of dethiobiotin (DTB) to biotin by the insertion of a sulfur atom into dethiobiotin via a radical-based mechanism. The sequence is that of Biotin synthase from Paraburkholderia phymatum (strain DSM 17167 / CIP 108236 / LMG 21445 / STM815) (Burkholderia phymatum).